The following is a 492-amino-acid chain: N-succinylglutamate 5-semialdehyde dehydrogenase (492 aa).

220–225 (GSSTTG) provides a ligand contact to NAD(+). Catalysis depends on residues glutamate 243 and cysteine 277.

This sequence belongs to the aldehyde dehydrogenase family. AstD subfamily.

The enzyme catalyses N-succinyl-L-glutamate 5-semialdehyde + NAD(+) + H2O = N-succinyl-L-glutamate + NADH + 2 H(+). It functions in the pathway amino-acid degradation; L-arginine degradation via AST pathway; L-glutamate and succinate from L-arginine: step 4/5. Its function is as follows. Catalyzes the NAD-dependent reduction of succinylglutamate semialdehyde into succinylglutamate. The chain is N-succinylglutamate 5-semialdehyde dehydrogenase from Klebsiella pneumoniae subsp. pneumoniae (strain ATCC 700721 / MGH 78578).